The sequence spans 291 residues: NAD kinase (291 aa).

Aspartate 73 functions as the Proton acceptor in the catalytic mechanism. NAD(+)-binding positions include 73 to 74 (DG), 147 to 148 (ND), arginine 175, aspartate 177, 188 to 193 (TAYALS), alanine 212, and glutamine 246.

It belongs to the NAD kinase family. The cofactor is a divalent metal cation.

The protein resides in the cytoplasm. The catalysed reaction is NAD(+) + ATP = ADP + NADP(+) + H(+). In terms of biological role, involved in the regulation of the intracellular balance of NAD and NADP, and is a key enzyme in the biosynthesis of NADP. Catalyzes specifically the phosphorylation on 2'-hydroxyl of the adenosine moiety of NAD to yield NADP. The polypeptide is NAD kinase (Polaromonas naphthalenivorans (strain CJ2)).